Consider the following 402-residue polypeptide: RNA-binding protein 42 (402 aa).

The tract at residues 240-275 (ETASDDSVIGPSMPEPEPVHVEPVDTSTEDKKKGKQ) is disordered. The segment covering 256-275 (EPVHVEPVDTSTEDKKKGKQ) has biased composition (basic and acidic residues). The region spanning 303–381 (FRIFCGDLGN…RPIKLRKSAW (79 aa)) is the RRM domain.

It belongs to the RRM RBM42 family.

It localises to the nucleus. It is found in the cytoplasm. In terms of biological role, may bind RNA. This is RNA-binding protein 42 (rbm42) from Danio rerio (Zebrafish).